Consider the following 209-residue polypeptide: MARNLDPKCRQCRREGEKLFLKAEKCFTDKCAIERRAYAPGQHGQRSGQRMSGYGVQLREKQKIRRLYGVLEAQFRKVYAEAERRRGQTGENLLQLLEGRLDSVVYRMGFGGSRAESRQLVRHNGILVNGKRVNIPSYVVRPGDVVELTEGSRGQLRVKAALEAAASRGFPEWLDVDAKAGKGTFKAYPQRAELPPTINEGLVVELYSR.

An S4 RNA-binding domain is found at 99–164; that stretch reads GRLDSVVYRM…QLRVKAALEA (66 aa).

Belongs to the universal ribosomal protein uS4 family. Part of the 30S ribosomal subunit. Contacts protein S5. The interaction surface between S4 and S5 is involved in control of translational fidelity.

In terms of biological role, one of the primary rRNA binding proteins, it binds directly to 16S rRNA where it nucleates assembly of the body of the 30S subunit. Functionally, with S5 and S12 plays an important role in translational accuracy. This Aromatoleum aromaticum (strain DSM 19018 / LMG 30748 / EbN1) (Azoarcus sp. (strain EbN1)) protein is Small ribosomal subunit protein uS4.